Reading from the N-terminus, the 500-residue chain is Cytochrome P450 CYP736A12 (500 aa).

A helical transmembrane segment spans residues 4 to 24; that stretch reads LAYPLLFVLLGALSWWILPII. Cysteine 442 contributes to the heme binding site.

Belongs to the cytochrome P450 family. Heme serves as cofactor.

The protein localises to the membrane. Its function is as follows. Probable heme-thiolate monooxygenase. The protein is Cytochrome P450 CYP736A12 of Panax ginseng (Korean ginseng).